The following is a 402-amino-acid chain: Mitochondrial inner membrane protein OXA1 (402 aa).

A mitochondrion-targeting transit peptide spans 1 to 42 (MFKLTSRLVTSRFAASSRLATARTIVLPRPHPSWISFQAKRF). At 43–118 (NSTGPNANDV…PSDIIQHVLE (76 aa)) the chain is on the mitochondrial intermembrane side. A helical transmembrane segment spans residues 119-139 (AVHVYSGLPWWGTIAATTILI). The Mitochondrial matrix portion of the chain corresponds to 140–199 (RCLMFPLYVKSSDTVARNSHIKPELDALNNKLMSTTDLQQGQLVAMQRKKLLSSHGIKNR). The helical transmembrane segment at 200 to 220 (WLAAPMLQIPIALGFFNALRH) threads the bilayer. The Mitochondrial intermembrane portion of the chain corresponds to 221–239 (MANYPVDGFANQGVAWFTD). The chain crosses the membrane as a helical span at residues 240–260 (LTQADPYLGLQVITAAVFISF). The Mitochondrial matrix portion of the chain corresponds to 261–275 (TRLGGETGAQQFSSP). The helical transmembrane segment at 276-292 (MKRLFTILPIISIPATM) threads the bilayer. At 293–297 (NLSSA) the chain is on the mitochondrial intermembrane side. A helical transmembrane segment spans residues 298–316 (VVLYFAFNGAFSVLQTMIL). The Mitochondrial matrix segment spans residues 317–402 (RNKWVRSKLK…HKSNFINNKK (86 aa)). Basic and acidic residues predominate over residues 366 to 385 (RQLMQDNEKKLQESFKEKRQ). Positions 366-386 (RQLMQDNEKKLQESFKEKRQN) are disordered.

The protein belongs to the OXA1/ALB3/YidC family. In terms of assembly, interacts with the large ribosome subunit of mitochondrial ribosome. Interacts directly with MRP20. Interacts with OXA1.

The protein localises to the mitochondrion inner membrane. Its function is as follows. Mitochondrial inner membrane insertase that mediates the insertion of both mitochondrion-encoded precursors and nuclear-encoded proteins from the matrix into the inner membrane. Links mitoribosomes with the inner membrane. Forms pores capable of accommodating translocating protein segments. Essential for the activity and assembly of cytochrome c oxidase. Plays a central role in the translocation and export of the N-terminal part of the COX2 protein into the mitochondrial intermembrane space. The sequence is that of Mitochondrial inner membrane protein OXA1 from Saccharomyces cerevisiae (strain ATCC 204508 / S288c) (Baker's yeast).